The following is an 833-amino-acid chain: Coiled-coil domain-containing protein 110 (833 aa).

Residues Leu431 to Ile778 adopt a coiled-coil conformation.

It localises to the nucleus. The sequence is that of Coiled-coil domain-containing protein 110 (CCDC110) from Macaca fascicularis (Crab-eating macaque).